A 100-amino-acid chain; its full sequence is uncharacterized protein (100 aa).

The disordered stretch occupies residues 78–100 (KPYRTESGTSSSNRMMLPPRQHV).

This is an uncharacterized protein from Caenorhabditis elegans.